Consider the following 129-residue polypeptide: Small ribosomal subunit protein uS8 (129 aa).

It belongs to the universal ribosomal protein uS8 family. As to quaternary structure, part of the 30S ribosomal subunit.

Functionally, one of the primary rRNA binding proteins, it binds directly to 16S rRNA central domain where it helps coordinate assembly of the platform of the 30S subunit. The protein is Small ribosomal subunit protein uS8 of Methanothrix thermoacetophila (strain DSM 6194 / JCM 14653 / NBRC 101360 / PT) (Methanosaeta thermophila).